The sequence spans 193 residues: NADH-quinone oxidoreductase subunit B (193 aa).

Positions 72, 73, 137, and 167 each coordinate [4Fe-4S] cluster.

The protein belongs to the complex I 20 kDa subunit family. In terms of assembly, NDH-1 is composed of 14 different subunits. Subunits NuoB, C, D, E, F, and G constitute the peripheral sector of the complex. It depends on [4Fe-4S] cluster as a cofactor.

It is found in the cell inner membrane. The enzyme catalyses a quinone + NADH + 5 H(+)(in) = a quinol + NAD(+) + 4 H(+)(out). Its function is as follows. NDH-1 shuttles electrons from NADH, via FMN and iron-sulfur (Fe-S) centers, to quinones in the respiratory chain. The immediate electron acceptor for the enzyme in this species is believed to be ubiquinone. Couples the redox reaction to proton translocation (for every two electrons transferred, four hydrogen ions are translocated across the cytoplasmic membrane), and thus conserves the redox energy in a proton gradient. The sequence is that of NADH-quinone oxidoreductase subunit B from Caulobacter vibrioides (strain ATCC 19089 / CIP 103742 / CB 15) (Caulobacter crescentus).